A 345-amino-acid polypeptide reads, in one-letter code: Phosphoribosylformylglycinamidine cyclo-ligase (345 aa).

This sequence belongs to the AIR synthase family.

It is found in the cytoplasm. The catalysed reaction is 2-formamido-N(1)-(5-O-phospho-beta-D-ribosyl)acetamidine + ATP = 5-amino-1-(5-phospho-beta-D-ribosyl)imidazole + ADP + phosphate + H(+). The protein operates within purine metabolism; IMP biosynthesis via de novo pathway; 5-amino-1-(5-phospho-D-ribosyl)imidazole from N(2)-formyl-N(1)-(5-phospho-D-ribosyl)glycinamide: step 2/2. This chain is Phosphoribosylformylglycinamidine cyclo-ligase, found in Methylococcus capsulatus (strain ATCC 33009 / NCIMB 11132 / Bath).